The primary structure comprises 637 residues: Galactofuranosyltransferase GlfT2 (637 aa).

Positions 171, 200, 229, and 256 each coordinate UDP-alpha-D-galactofuranose. Mn(2+) is bound by residues aspartate 256 and aspartate 258. Aspartate 372 acts as the Proton acceptor in catalysis. Histidine 396 is a Mn(2+) binding site.

Belongs to the glycosyltransferase 2 family. In terms of assembly, homotetramer. The cofactor is Mn(2+). Mg(2+) serves as cofactor.

The protein resides in the cell membrane. The catalysed reaction is beta-D-galactofuranosyl-(1-&gt;5)-beta-D-galactofuranosyl-(1-&gt;4)-alpha-L-rhamnosyl-(1-&gt;3)-N-acetyl-alpha-D-glucosaminyl-diphospho-trans,octa-cis-decaprenol + 28 UDP-alpha-D-galactofuranose = [beta-D-galactofuranosyl-(1-&gt;5)-beta-D-galactofuranosyl-(1-&gt;6)]14-beta-D-galactofuranosyl-(1-&gt;5)-beta-D-galactofuranosyl-(1-&gt;4)-alpha-L-rhamnopyranosyl-(1-&gt;3)-N-acetyl-alpha-D-glucosaminyl-diphospho-trans,octa-cis-decaprenol + 28 UDP + 28 H(+). It participates in cell wall biogenesis; cell wall polysaccharide biosynthesis. Functionally, involved in the galactan polymerization of the arabinogalactan (AG) region of the mycolylarabinogalactan-peptidoglycan (mAGP) complex, an essential component of the mycobacteria cell wall. Thus, successively transfers approximately 28 galactofuranosyl (Galf) residues from UDP-galactofuranose (UDP-Galf) onto the galactofuranosyl-galactofuranosyl-rhamnosyl-GlcNAc-diphospho-decaprenol (Galf-Galf-Rha-GlcNAc-PP-C50) acceptor produced by GlfT1, with alternating 1-&gt;5 and 1-&gt;6 links, forming a galactan domain with approximately 30 galactofuranosyl residues. The protein is Galactofuranosyltransferase GlfT2 of Mycobacterium tuberculosis (strain ATCC 25618 / H37Rv).